We begin with the raw amino-acid sequence, 154 residues long: 3-hydroxyacyl-[acyl-carrier-protein] dehydratase FabZ (154 aa).

Residue histidine 54 is part of the active site.

It belongs to the thioester dehydratase family. FabZ subfamily.

The protein localises to the cytoplasm. It carries out the reaction a (3R)-hydroxyacyl-[ACP] = a (2E)-enoyl-[ACP] + H2O. In terms of biological role, involved in unsaturated fatty acids biosynthesis. Catalyzes the dehydration of short chain beta-hydroxyacyl-ACPs and long chain saturated and unsaturated beta-hydroxyacyl-ACPs. This is 3-hydroxyacyl-[acyl-carrier-protein] dehydratase FabZ from Shewanella baltica (strain OS223).